Consider the following 188-residue polypeptide: Phosphatidylcholine-sterol acyltransferase (188 aa).

N-linked (GlcNAc...) asparagine glycosylation occurs at N20. H169 functions as the Charge relay system in the catalytic mechanism.

The protein belongs to the AB hydrolase superfamily. Lipase family. In terms of tissue distribution, detected in blood plasma (at protein level).

The protein localises to the secreted. It catalyses the reaction a sterol + a 1,2-diacyl-sn-glycero-3-phosphocholine = a sterol ester + a 1-acyl-sn-glycero-3-phosphocholine. The enzyme catalyses a 1-O-alkyl-2-acetyl-sn-glycero-3-phosphocholine + H2O = a 1-O-alkyl-sn-glycero-3-phosphocholine + acetate + H(+). It carries out the reaction a 1-hexadecanoyl-2-acyl-sn-glycero-3-phosphocholine + (24S)-hydroxycholesterol = (24S)-24-hydroxycholesterol ester + 1-hexadecanoyl-sn-glycero-3-phosphocholine. The catalysed reaction is (24S)-hydroxycholesterol + 1-hexadecanoyl-2-(9Z,12Z-octadecadienoyl)-sn-glycero-3-phosphocholine = (24S)-hydroxycholesterol 3-linoleoate + 1-hexadecanoyl-sn-glycero-3-phosphocholine. It catalyses the reaction 1-hexadecanoyl-2-(5Z,8Z,11Z,14Z-eicosatetraenoyl)-sn-glycero-3-phosphocholine + cholesterol = cholesteryl (5Z,8Z,11Z,14Z)-eicosatetraenoate + 1-hexadecanoyl-sn-glycero-3-phosphocholine. The enzyme catalyses 1-hexadecanoyl-2-(9Z-octadecenoyl)-sn-glycero-3-phosphocholine + cholesterol = cholesteryl (9Z-octadecenoate) + 1-hexadecanoyl-sn-glycero-3-phosphocholine. It carries out the reaction 1-hexadecanoyl-2-(8Z,11Z,14Z-eicosatrienoyl)-sn-glycero-3-phosphocholine + cholesterol = cholesteryl (8Z,11Z,14Z)-eicosatrienoate + 1-hexadecanoyl-sn-glycero-3-phosphocholine. The catalysed reaction is 1-hexadecanoyl-2-(5Z,8Z,11Z-eicosatrienoyl)-sn-glycero-3-phosphocholine + cholesterol = cholesteryl (5Z,8Z,11Z)-eicosatrienoate + 1-hexadecanoyl-sn-glycero-3-phosphocholine. It catalyses the reaction 1-hexadecanoyl-2-(5Z,8Z,11Z,14Z,17Z-eicosapentaenoyl)-sn-glycero-3-phosphocholine + cholesterol = (5Z,8Z,11Z,14Z,17Z-eicosapentaenoyl)-cholesterol + 1-hexadecanoyl-sn-glycero-3-phosphocholine. The enzyme catalyses 1-hexadecanoyl-2-(9Z,12Z-octadecadienoyl)-sn-glycero-3-phosphocholine + cholesterol = cholesteryl (9Z,12Z)-octadecadienoate + 1-hexadecanoyl-sn-glycero-3-phosphocholine. It carries out the reaction 1-hexadecanoyl-2-(6Z,9Z,12Z-octadecatrienoyl)-sn-glycero-3-phosphocholine + cholesterol = (6Z,9Z,12Z-octadecatrienoyl)-cholesterol + 1-hexadecanoyl-sn-glycero-3-phosphocholine. The catalysed reaction is 1-hexadecanoyl-2-(11Z,14Z,17Z-eicosatrienoyl)-sn-glycero-3-phosphocholine + cholesterol = (11Z,14Z,17Z-eicosatrienoyl)-cholesterol + 1-hexadecanoyl-sn-glycero-3-phosphocholine. It catalyses the reaction 1-hexadecanoyl-2-(9Z,12Z,15Z-octadecatrienoyl)-sn-glycero-3-phosphocholine + cholesterol = (9Z,12Z,15Z-octadecatrienoyl)-cholesterol + 1-hexadecanoyl-sn-glycero-3-phosphocholine. The enzyme catalyses 1-hexadecanoyl-2-(9Z,12Z-octadecadienoyl)-sn-glycero-3-phosphocholine + H2O = (9Z,12Z)-octadecadienoate + 1-hexadecanoyl-sn-glycero-3-phosphocholine + H(+). It carries out the reaction 1-hexadecanoyl-2-(5Z,8Z,11Z,14Z-eicosatetraenoyl)-sn-glycero-3-phosphocholine + H2O = 1-hexadecanoyl-sn-glycero-3-phosphocholine + (5Z,8Z,11Z,14Z)-eicosatetraenoate + H(+). The catalysed reaction is a 1-O-alkyl-2-acetyl-sn-glycero-3-phosphocholine + 1-hexadecanoyl-sn-glycero-3-phosphocholine = 1-hexadecanoyl-2-acetyl-sn-glycero-3-phosphocholine + a 1-O-alkyl-sn-glycero-3-phosphocholine. Its function is as follows. Central enzyme in the extracellular metabolism of plasma lipoproteins. Synthesized mainly in the liver and secreted into plasma where it converts cholesterol and phosphatidylcholines (lecithins) to cholesteryl esters and lysophosphatidylcholines on the surface of high and low density lipoproteins (HDLs and LDLs). The cholesterol ester is then transported back to the liver. Also produced in the brain by primary astrocytes, and esterifies free cholesterol on nascent APOE-containing lipoproteins secreted from glia and influences cerebral spinal fluid (CSF) APOE- and APOA1 levels. Together with APOE and the cholesterol transporter ABCA1, plays a key role in the maturation of glial-derived, nascent lipoproteins. Required for remodeling high-density lipoprotein particles into their spherical forms. Has a preference for plasma 16:0-18:2 or 18:O-18:2 phosphatidylcholines. Catalyzes the hydrolysis of 1-O-alkyl-2-acetyl-sn-glycero-3-phosphocholine (platelet-activating factor or PAF) to 1-O-alkyl-sn-glycero-3-phosphocholine (lyso-PAF). Also catalyzes the transfer of the acetate group from PAF to 1-hexadecanoyl-sn-glycero-3-phosphocholine forming lyso-PAF. Catalyzes the esterification of (24S)-hydroxycholesterol (24(S)OH-C), also known as cerebrosterol to produce 24(S)OH-C monoesters. The chain is Phosphatidylcholine-sterol acyltransferase (LCAT) from Sus scrofa (Pig).